Reading from the N-terminus, the 1151-residue chain is ATP-dependent helicase/deoxyribonuclease subunit B (1151 aa).

Positions 1–273 (MALRLVLGRA…LALAAGVRVE (273 aa)) constitute a UvrD-like helicase ATP-binding domain. 8–15 (GRAGSGKT) serves as a coordination point for ATP. The 297-residue stretch at 282 to 578 (PPRFREAPAL…KLRLIPPALD (297 aa)) folds into the UvrD-like helicase C-terminal domain. [4Fe-4S] cluster is bound by residues Cys-788, Cys-1107, Cys-1110, and Cys-1116.

Belongs to the helicase family. AddB/RexB type 1 subfamily. In terms of assembly, heterodimer of AddA and AddB. Requires Mg(2+) as cofactor. [4Fe-4S] cluster serves as cofactor.

In terms of biological role, the heterodimer acts as both an ATP-dependent DNA helicase and an ATP-dependent, dual-direction single-stranded exonuclease. Recognizes the chi site generating a DNA molecule suitable for the initiation of homologous recombination. The AddB subunit has 5' -&gt; 3' nuclease activity but not helicase activity. This is ATP-dependent helicase/deoxyribonuclease subunit B from Moorella thermoacetica (strain ATCC 39073 / JCM 9320).